The primary structure comprises 954 residues: Glycine dehydrogenase (decarboxylating) (954 aa).

At lysine 704 the chain carries N6-(pyridoxal phosphate)lysine.

This sequence belongs to the GcvP family. The glycine cleavage system is composed of four proteins: P, T, L and H. Pyridoxal 5'-phosphate serves as cofactor.

It catalyses the reaction N(6)-[(R)-lipoyl]-L-lysyl-[glycine-cleavage complex H protein] + glycine + H(+) = N(6)-[(R)-S(8)-aminomethyldihydrolipoyl]-L-lysyl-[glycine-cleavage complex H protein] + CO2. In terms of biological role, the glycine cleavage system catalyzes the degradation of glycine. The P protein binds the alpha-amino group of glycine through its pyridoxal phosphate cofactor; CO(2) is released and the remaining methylamine moiety is then transferred to the lipoamide cofactor of the H protein. The protein is Glycine dehydrogenase (decarboxylating) of Rhizobium meliloti (strain 1021) (Ensifer meliloti).